A 189-amino-acid polypeptide reads, in one-letter code: uncharacterized protein (189 aa).

Positions 1-23 are cleaved as a signal peptide; sequence MIKTTPHKIVILMGILLSPSVFA. A disordered region spans residues 104–125; it reads SSPKLIIPQSGDSSSTTSNIGM. Residues 113–123 show a composition bias toward polar residues; the sequence is SGDSSSTTSNI.

This sequence belongs to the fimbrial protein family.

Its subcellular location is the fimbrium. Functionally, part of the yadCKLM-htrE-yadVN fimbrial operon. Could contribute to adhesion to various surfaces in specific environmental niches. This is an uncharacterized protein from Escherichia coli (strain K12).